The sequence spans 257 residues: Molybdate-binding protein ModA (257 aa).

Residues 1 to 24 form the signal peptide; the sequence is MARKWLNLFAGAALSFAVAGNALA. Molybdate-binding residues include serine 36, serine 63, alanine 149, valine 176, and tyrosine 194.

Belongs to the bacterial solute-binding protein ModA family. In terms of assembly, the complex is composed of two ATP-binding proteins (ModC), two transmembrane proteins (ModB) and a solute-binding protein (ModA).

The protein localises to the periplasm. Part of the ABC transporter complex ModABC involved in the transport of molybdenum into the cell. Binds molybdate with high affinity in vitro and with a similar affinity in vivo. Binds tungstate with high affinity in vitro. Binds unnatural anion perrhenate with high affinity in vitro. Does not bind sulfate, phosphate, arsenate, selenate, chlorate, metavanadate, nitrate, perchlorate, permanganate or carbonate. The sequence is that of Molybdate-binding protein ModA (modA) from Escherichia coli (strain K12).